Consider the following 268-residue polypeptide: Zygote formation protein zyg1 (268 aa).

Its function is as follows. Plays an essential role in zygote formation by inducing sexual cell fusion. Overexpressing cells eventually formed many loose mounds, in which giant multinucleate cells were surrounded by normal-sized cells. This is Zygote formation protein zyg1 (zyg1) from Dictyostelium mucoroides (Slime mold).